The sequence spans 1108 residues: Unconventional myosin-Ie (1108 aa).

Residues 19–692 (SGVDDMVLLS…SLFLLEEMRE (674 aa)) form the Myosin motor domain. An ATP-binding site is contributed by 112-119 (GESGAGKT). Residues 581 to 591 (PHYIRCIKPNE) are actin-binding. In terms of domain architecture, IQ spans 695 to 724 (YDGYARVIQKSWRKFVARKKYVQMREEASD). The region spanning 730 to 922 (KERRRNSINR…NKVLQVSIGP (193 aa)) is the TH1 domain. The interval 919-966 (SIGPGLPKNSRPTRRNTTQNTGYSSGTQNANYPVRAAPPPPGYHQNGV) is disordered. Residues 933–949 (RNTTQNTGYSSGTQNAN) are compositionally biased toward polar residues. 2 positions are modified to phosphoserine: Ser-980 and Ser-1002. The segment at 993-1053 (ARPPLPRQQS…KPQPKPKPQV (61 aa)) is disordered. Residues 999–1013 (RQQSTSSDRVSQTPE) are compositionally biased toward polar residues. A compositionally biased stretch (pro residues) spans 1035–1052 (RPPPAGGRPKPQPKPKPQ). An SH3 domain is found at 1051–1108 (PQVPQCKALYAYDAQDTDELSFNANDIIDIIKEDPSGWWTGRLRGKQGLFPNNYVTKI).

It belongs to the TRAFAC class myosin-kinesin ATPase superfamily. Myosin family. In terms of assembly, interacts with CALM and F-actin. Interacts (via SH3 domain) with SYNJ1, DNM1 and DNM2. Interacts with ARL14EP. Interacts with CARMIL1. Expressed in the immune system. In the kidney, predominantly expressed in the glomerulus, including podocytes.

The protein localises to the cytoplasm. The protein resides in the cytoskeleton. It is found in the cytoplasmic vesicle. It localises to the clathrin-coated vesicle. Its subcellular location is the cell junction. Functionally, actin-based motor molecule with ATPase activity. Unconventional myosins serve in intracellular movements. Their highly divergent tails bind to membranous compartments, which are then moved relative to actin filaments. Binds to membranes containing anionic phospholipids via its tail domain. Involved in clathrin-mediated endocytosis and intracellular movement of clathrin-coated vesicles. Required for normal morphology of the glomerular basement membrane, normal development of foot processes by kidney podocytes and normal kidney function. In dendritic cells, may control the movement of class II-containing cytoplasmic vesicles along the actin cytoskeleton by connecting them with the actin network via ARL14EP and ARL14. The protein is Unconventional myosin-Ie (MYO1E) of Homo sapiens (Human).